A 98-amino-acid chain; its full sequence is NADH-ubiquinone oxidoreductase chain 4L (98 aa).

The next 3 membrane-spanning stretches (helical) occupy residues 1–21, 26–46, and 59–79; these read MTPT…GLTF, LLSA…SMAL, and APML…ALLV.

It belongs to the complex I subunit 4L family. Core subunit of respiratory chain NADH dehydrogenase (Complex I) which is composed of 45 different subunits.

The protein resides in the mitochondrion inner membrane. It catalyses the reaction a ubiquinone + NADH + 5 H(+)(in) = a ubiquinol + NAD(+) + 4 H(+)(out). Core subunit of the mitochondrial membrane respiratory chain NADH dehydrogenase (Complex I) which catalyzes electron transfer from NADH through the respiratory chain, using ubiquinone as an electron acceptor. Part of the enzyme membrane arm which is embedded in the lipid bilayer and involved in proton translocation. The polypeptide is NADH-ubiquinone oxidoreductase chain 4L (mt-nd4l) (Danio rerio (Zebrafish)).